The following is a 516-amino-acid chain: Pickpocket protein 11 (516 aa).

A run of 2 helical transmembrane segments spans residues 117-137 (ILWW…VIMS) and 454-474 (FIGT…VSVF).

The protein belongs to the amiloride-sensitive sodium channel (TC 1.A.6) family. In terms of tissue distribution, expressed in embryonic and larval tracheal systems in the dorsal trunk and transverse connective (TC), but not in the junction between the dorsal trunk and TC, and in several tracheal branches and terminal cells. In larvae, also expressed in ventral pits. Expressed in the taste-sensing terminal organ of the larval head. In adult, expressed in hairs on the tibia, femur, tarsi of the leg and wing margin.

The protein resides in the membrane. Its function is as follows. Part of a complex that plays a role in tracheal liquid clearance. In both larvae and adults, contributes to the behavioral response to salt. Probable role in sodium transport. This is Pickpocket protein 11 (ppk11) from Drosophila melanogaster (Fruit fly).